The chain runs to 877 residues: TSET complex member tstB (877 aa).

2 disordered regions span residues 398–437 and 522–557; these read HLHH…SGSS and TGLP…SNSI. 2 stretches are compositionally biased toward low complexity: residues 412–437 and 529–556; these read GSVP…SGSS and SNNN…SSNS.

Component of the TSET complex, a heterohexamer composed of tstA, tstB, tstC, tstD, tstE and tstF, which may act in plasma membrane turnover. tstA, tstB, tstC and tstD are likely to be the core complex members with tstE and tstF acting as associated scaffold proteins.

In Dictyostelium discoideum (Social amoeba), this protein is TSET complex member tstB.